The chain runs to 281 residues: Aldo-keto reductase MAP_3007 (281 aa).

The active-site Proton donor is tyrosine 56. Leucine 196, isoleucine 234, arginine 236, serine 237, alanine 238, serine 245, and arginine 272 together coordinate NADPH.

Belongs to the aldo/keto reductase family.

This chain is Aldo-keto reductase MAP_3007, found in Mycolicibacterium paratuberculosis (strain ATCC BAA-968 / K-10) (Mycobacterium paratuberculosis).